Here is a 235-residue protein sequence, read N- to C-terminus: Attacin-E (235 aa).

Residues 1–19 (MFGKIVFLLLVALCAGVQS) form the signal peptide. Residues 20–47 (RYLIVSEPVYYIEHYEEPELLASSRVRR) constitute a propeptide that is removed on maturation.

Belongs to the attacin/sarcotoxin-2 family. Attacin F appears to be derived by proteolytic digestion of attacin E.

It localises to the secreted. In terms of biological role, hemolymph antibacterial protein. The protein is Attacin-E of Hyalophora cecropia (Cecropia moth).